We begin with the raw amino-acid sequence, 155 residues long: Interleukin-2 (155 aa).

Positions 1–20 (MYKMQLLSCIALTLVLVANS) are cleaved as a signal peptide. Threonine 23 is a glycosylation site (O-linked (GalNAc...) threonine). Cysteine 79 and cysteine 127 are joined by a disulfide.

It belongs to the IL-2 family.

It localises to the secreted. Cytokine produced by activated CD4-positive helper T-cells and to a lesser extend activated CD8-positive T-cells and natural killer (NK) cells that plays pivotal roles in the immune response and tolerance. Binds to a receptor complex composed of either the high-affinity trimeric IL-2R (IL2RA/CD25, IL2RB/CD122 and IL2RG/CD132) or the low-affinity dimeric IL-2R (IL2RB and IL2RG). Interaction with the receptor leads to oligomerization and conformation changes in the IL-2R subunits resulting in downstream signaling starting with phosphorylation of JAK1 and JAK3. In turn, JAK1 and JAK3 phosphorylate the receptor to form a docking site leading to the phosphorylation of several substrates including STAT5. This process leads to activation of several pathways including STAT, phosphoinositide-3-kinase/PI3K and mitogen-activated protein kinase/MAPK pathways. Functions as a T-cell growth factor and can increase NK-cell cytolytic activity as well. Promotes strong proliferation of activated B-cells and subsequently immunoglobulin production. Plays a pivotal role in regulating the adaptive immune system by controlling the survival and proliferation of regulatory T-cells, which are required for the maintenance of immune tolerance. Moreover, participates in the differentiation and homeostasis of effector T-cell subsets, including Th1, Th2, Th17 as well as memory CD8-positive T-cells. The chain is Interleukin-2 (IL2) from Halichoerus grypus (Gray seal).